The following is a 168-amino-acid chain: uncharacterized protein (168 aa).

Positions 1 to 166 (MRVLILAENE…FCGELIKILK (166 aa)) constitute a PfpI endopeptidase domain.

This sequence belongs to the peptidase C56 family.

This is an uncharacterized protein from Archaeoglobus fulgidus (strain ATCC 49558 / DSM 4304 / JCM 9628 / NBRC 100126 / VC-16).